Here is a 66-residue protein sequence, read N- to C-terminus: Beta-toxin Cll1m (66 aa).

The region spanning 1-66 is the LCN-type CS-alpha/beta domain; it reads KEGYIVNLST…VWPLPKKTCT (66 aa). 4 disulfide bridges follow: C12–C65, C16–C41, C25–C46, and C29–C48. T66 carries the post-translational modification Threonine amide.

It belongs to the long (4 C-C) scorpion toxin superfamily. Sodium channel inhibitor family. Beta subfamily. Expressed by the venom gland.

It is found in the secreted. Beta toxins bind voltage-independently at site-4 of sodium channels (Nav) and shift the voltage of activation toward more negative potentials thereby affecting sodium channel activation and promoting spontaneous and repetitive firing. The protein is Beta-toxin Cll1m of Centruroides limpidus (Mexican scorpion).